A 289-amino-acid polypeptide reads, in one-letter code: Alpha-soluble NSF attachment protein (289 aa).

One copy of the TPR repeat lies at 112-145 (GKYYKEIAELYELEQNFEQAIIYFEKAADIYQSE).

It belongs to the SNAP family.

The protein localises to the membrane. Functionally, required for vesicular transport between the endoplasmic reticulum and the Golgi apparatus. The polypeptide is Alpha-soluble NSF attachment protein (Vitis vinifera (Grape)).